The chain runs to 322 residues: Sideroflexin-1 (322 aa).

N-acetylserine is present on S2. At 2–102 (SGELPPNINI…MSAQVPMNMT (101 aa)) the chain is on the mitochondrial matrix side. Residues 103–120 (ITGCMMTFYRTTPAVLFW) form a helical membrane-spanning segment. Residues 121-146 (QWVNQSFNAVVNYTNRSGDAPLTVNE) are Mitochondrial intermembrane-facing. The chain crosses the membrane as a helical span at residues 147 to 167 (LGTAYVSATTGAVATALGLNA). Residues 168–174 (LTKRVSP) are Mitochondrial matrix-facing. The helical transmembrane segment at 175–195 (LVGRFVPFAAVAAANCINIPL) threads the bilayer. Residues 196 to 228 (MRQRELKVGIPVTDENGNRLGESASAAKQAITQ) are Mitochondrial intermembrane-facing. A helical transmembrane segment spans residues 229 to 249 (VVVSRILMAAPGMAIPPFIMN). The Mitochondrial matrix portion of the chain corresponds to 250-266 (TLEKKAFLKRFPWMSAP). The chain crosses the membrane as a helical span at residues 267–287 (VQVGIVGFCLVFATPLCCALF). Residues 288-322 (PQKSSMSVTSLEAELQARIRETYPELRRVYFNKGL) are Mitochondrial intermembrane-facing.

This sequence belongs to the sideroflexin family.

The protein localises to the mitochondrion inner membrane. The enzyme catalyses L-serine(in) = L-serine(out). The catalysed reaction is L-alanine(in) = L-alanine(out). It catalyses the reaction L-cysteine(in) = L-cysteine(out). In terms of biological role, amino acid transporter importing serine, an essential substrate of the mitochondrial branch of the one-carbon pathway, into mitochondria. Mitochondrial serine is then converted to glycine and formate, which exits to the cytosol where it is used to generate the charged folates that serve as one-carbon donors. May also transport other amino acids including alanine and cysteine. The protein is Sideroflexin-1 (SFXN1) of Ovis aries (Sheep).